The chain runs to 317 residues: Phospholipase A1 1 (317 aa).

The first 7 residues, Arg-1–Gly-7, serve as a signal peptide directing secretion. Positions Asp-8 to Arg-17 are excised as a propeptide. Residues Cys-21 and Cys-104 are joined by a disulfide bond. The N-linked (GlcNAc...) asparagine glycan is linked to Asn-25. Catalysis depends on Ser-154, which acts as the Nucleophile. The Charge relay system role is filled by Asp-182. Residues Cys-193 and Cys-198 are joined by a disulfide bond. Residue Asn-229 is glycosylated (N-linked (GlcNAc...) asparagine). A disulfide bridge links Cys-236 with Cys-244. His-246 serves as the catalytic Charge relay system. Cystine bridges form between Cys-261/Cys-285, Cys-262/Cys-310, and Cys-278/Cys-283.

Belongs to the AB hydrolase superfamily. Lipase family. In terms of tissue distribution, expressed by the venom gland.

The protein resides in the secreted. The catalysed reaction is a 1,2-diacyl-sn-glycero-3-phosphocholine + H2O = a 2-acyl-sn-glycero-3-phosphocholine + a fatty acid + H(+). Catalyzes the hydrolysis of phosphatidylcholine with phospholipase A1 activity. May act as an allergen and induce hemolytic activity. The sequence is that of Phospholipase A1 1 from Dolichovespula maculata (Bald-faced hornet).